The primary structure comprises 624 residues: Na(+)/H(+) antiporter NhaA (624 aa).

The tract at residues 1 to 164 is unknown; the sequence is MNPELPPNHL…TFFINGRRYD (164 aa). The segment at 165-624 is na(+)/H(+) antiporter NhaA; it reads GPWDVRSLSE…NAQAEEEKNP (460 aa). Helical transmembrane passes span 199-219, 240-260, 279-299, 319-339, 348-368, 371-391, 407-427, 497-517, 521-541, 565-585, and 596-616; these read GIML…ALGP, LSLR…VVGL, LPIA…LILV, GWGV…AMMG, VFLT…VAIF, GELH…LALL, IVLW…GIIL, FLVL…TSVF, IPLM…GFIT, GAGA…SQAF, and IAIF…LWNA.

This sequence belongs to the NhaA Na(+)/H(+) (TC 2.A.33) antiporter family.

The protein resides in the cell inner membrane. The enzyme catalyses Na(+)(in) + 2 H(+)(out) = Na(+)(out) + 2 H(+)(in). Its function is as follows. Na(+)/H(+) antiporter that extrudes sodium in exchange for external protons. The protein is Na(+)/H(+) antiporter NhaA of Nitrosospira multiformis (strain ATCC 25196 / NCIMB 11849 / C 71).